Reading from the N-terminus, the 226-residue chain is PKHD-type hydroxylase LHK_00496 (226 aa).

A Fe2OG dioxygenase domain is found at 78 to 178 (RFFPPLFNRY…RVASFMWIQS (101 aa)). Fe cation is bound by residues His-96, Asp-98, and His-159. Arg-169 contacts 2-oxoglutarate.

The cofactor is Fe(2+). It depends on L-ascorbate as a cofactor.

The chain is PKHD-type hydroxylase LHK_00496 from Laribacter hongkongensis (strain HLHK9).